The chain runs to 468 residues: uncharacterized protein (468 aa).

The TRAM domain maps to 3–61; it reads TFANGMTLDVTVDALAPGGKAVCRHEGRVIFVDRGLPGQQLHVRLTTVRKRFAEAECLA. Positions 74, 80, 83, and 162 each coordinate [4Fe-4S] cluster. S-adenosyl-L-methionine is bound by residues Gln-288, Tyr-317, Glu-338, and Asp-389. The active-site Nucleophile is the Cys-416.

The protein belongs to the class I-like SAM-binding methyltransferase superfamily. RNA M5U methyltransferase family.

This is an uncharacterized protein from Nitratidesulfovibrio vulgaris (strain ATCC 29579 / DSM 644 / CCUG 34227 / NCIMB 8303 / VKM B-1760 / Hildenborough) (Desulfovibrio vulgaris).